A 79-amino-acid chain; its full sequence is Centromere protein X (79 aa).

Position 1 is an N-acetylmethionine (Met-1).

This sequence belongs to the CENP-X/MHF2 family. Heterodimer with CENPX, sometimes called MHF; this interaction stabilizes both partners. MHF heterodimers can assemble to form tetrameric structures. MHF also coassemble with CENPT-CENPW heterodimers at centromeres to form the tetrameric CENP-T-W-S-X complex. Forms a discrete complex with FANCM and CENPX, called FANCM-MHF; this interaction, probably mediated by direct binding between CENPS and FANCM, leads to synergistic activation of double-stranded DNA binding and strongly stimulates FANCM-mediated DNA remodeling. Recruited by FANCM to the Fanconi anemia (FA) core complex, which consists of CENPS, CENPX, FANCA, FANCB, FANCC, FANCE, FANCF, FANCG, FANCL, FANCM, FAAP24 and FAAP100. The FA core complex associates with Bloom syndrome (BLM) complex, which consists of at least BLM, DNA topoisomerase 3-alpha (TOP3A), RMI1/BLAP75, RPA1/RPA70 and RPA2/RPA32. The super complex between FA and BLM is called BRAFT.

It is found in the nucleus. It localises to the chromosome. The protein localises to the centromere. Its subcellular location is the kinetochore. Its function is as follows. DNA-binding component of the Fanconi anemia (FA) core complex. Required for the normal activation of the FA pathway, leading to monoubiquitination of the FANCI-FANCD2 complex in response to DNA damage, cellular resistance to DNA cross-linking drugs, and prevention of chromosomal breakage. In complex with CENPS (MHF heterodimer), crucial cofactor for FANCM in both binding and ATP-dependent remodeling of DNA. Stabilizes FANCM. In complex with CENPS and FANCM (but not other FANC proteins), rapidly recruited to blocked forks and promotes gene conversion at blocked replication forks. In complex with CENPS, CENPT and CENPW (CENP-T-W-S-X heterotetramer), involved in the formation of a functional kinetochore outer plate, which is essential for kinetochore-microtubule attachment and faithful mitotic progression. As a component of MHF and CENP-T-W-S-X complexes, binds DNA and bends it to form a nucleosome-like structure. DNA-binding function is fulfilled in the presence of CENPS, with the following preference for DNA substates: Holliday junction &gt; double-stranded &gt; splay arm &gt; single-stranded. Does not bind DNA on its own. This chain is Centromere protein X (CENPX), found in Bos taurus (Bovine).